A 139-amino-acid chain; its full sequence is Putative pre-16S rRNA nuclease (139 aa).

It belongs to the YqgF nuclease family.

It is found in the cytoplasm. Its function is as follows. Could be a nuclease involved in processing of the 5'-end of pre-16S rRNA. This Streptococcus pyogenes serotype M2 (strain MGAS10270) protein is Putative pre-16S rRNA nuclease.